The chain runs to 177 residues: MEEEGVKMDVKLLNVSDQEMEEMRRNVFLTTLEQLKAWARSNSLWPLTFGLACCAIEMMGVGSSHYDLDRFGSFFRTSPRQSDVMIVSGTVTKKMAPIVRRLYDQMPEPKWVIAMGSCATAGGPYVKSYCVVKGVDQIVPVDVYIPGCPPNPAALIYGINKLKEKIRYEAKTGKKVL.

[4Fe-4S] cluster is bound by residues C53, C54, C118, and C148.

This sequence belongs to the complex I 20 kDa subunit family. In terms of assembly, NDH-1 is composed of 14 different subunits. Subunits NuoB, C, D, E, F, and G constitute the peripheral sector of the complex. [4Fe-4S] cluster is required as a cofactor.

It localises to the cell membrane. It catalyses the reaction a quinone + NADH + 5 H(+)(in) = a quinol + NAD(+) + 4 H(+)(out). Its function is as follows. NDH-1 shuttles electrons from NADH, via FMN and iron-sulfur (Fe-S) centers, to quinones in the respiratory chain. The immediate electron acceptor for the enzyme in this species is believed to be a menaquinone. Couples the redox reaction to proton translocation (for every two electrons transferred, four hydrogen ions are translocated across the cytoplasmic membrane), and thus conserves the redox energy in a proton gradient. This chain is NADH-quinone oxidoreductase subunit B, found in Anoxybacillus flavithermus (strain DSM 21510 / WK1).